The chain runs to 804 residues: Leucine--tRNA ligase (804 aa).

Residues 40-51 (PYPSGAGLHVGH) carry the 'HIGH' region motif. Positions 576-580 (KMSKS) match the 'KMSKS' region motif. Residue lysine 579 participates in ATP binding.

The protein belongs to the class-I aminoacyl-tRNA synthetase family.

It is found in the cytoplasm. The catalysed reaction is tRNA(Leu) + L-leucine + ATP = L-leucyl-tRNA(Leu) + AMP + diphosphate. This chain is Leucine--tRNA ligase, found in Staphylococcus haemolyticus (strain JCSC1435).